The primary structure comprises 941 residues: Glycine dehydrogenase (decarboxylating) (941 aa).

An N6-(pyridoxal phosphate)lysine modification is found at Lys692.

It belongs to the GcvP family. The glycine cleavage system is composed of four proteins: P, T, L and H. Pyridoxal 5'-phosphate is required as a cofactor.

It carries out the reaction N(6)-[(R)-lipoyl]-L-lysyl-[glycine-cleavage complex H protein] + glycine + H(+) = N(6)-[(R)-S(8)-aminomethyldihydrolipoyl]-L-lysyl-[glycine-cleavage complex H protein] + CO2. The glycine cleavage system catalyzes the degradation of glycine. The P protein binds the alpha-amino group of glycine through its pyridoxal phosphate cofactor; CO(2) is released and the remaining methylamine moiety is then transferred to the lipoamide cofactor of the H protein. This chain is Glycine dehydrogenase (decarboxylating), found in Mycobacterium avium (strain 104).